A 452-amino-acid polypeptide reads, in one-letter code: Pup--protein ligase (452 aa).

Glu9 lines the Mg(2+) pocket. Arg53 is a binding site for ATP. Tyr55 provides a ligand contact to Mg(2+). Asp57 serves as the catalytic Proton acceptor. Glu63 contributes to the Mg(2+) binding site. Residues Thr66 and Trp419 each coordinate ATP.

This sequence belongs to the Pup ligase/Pup deamidase family. Pup-conjugating enzyme subfamily.

It catalyses the reaction ATP + [prokaryotic ubiquitin-like protein]-L-glutamate + [protein]-L-lysine = ADP + phosphate + N(6)-([prokaryotic ubiquitin-like protein]-gamma-L-glutamyl)-[protein]-L-lysine.. Its pathway is protein degradation; proteasomal Pup-dependent pathway. It participates in protein modification; protein pupylation. In terms of biological role, catalyzes the covalent attachment of the prokaryotic ubiquitin-like protein modifier Pup to the proteasomal substrate proteins, thereby targeting them for proteasomal degradation. This tagging system is termed pupylation. The ligation reaction involves the side-chain carboxylate of the C-terminal glutamate of Pup and the side-chain amino group of a substrate lysine. The sequence is that of Pup--protein ligase from Acidothermus cellulolyticus (strain ATCC 43068 / DSM 8971 / 11B).